Reading from the N-terminus, the 421-residue chain is Anhydromevalonate phosphate decarboxylase (421 aa).

Residues Asn131 and Glu194 each coordinate Mn(2+). The Proton acceptor role is filled by Asp240.

This sequence belongs to the UbiD family. Requires prenylated FMN as cofactor. It depends on Mn(2+) as a cofactor.

The catalysed reaction is (2E)-3-methyl-5-phosphooxypent-2-enoate + H(+) = isopentenyl phosphate + CO2. Its pathway is isoprenoid biosynthesis; isopentenyl diphosphate biosynthesis via mevalonate pathway. Its function is as follows. Catalyzes the conversion of trans-anhydromevalonate 5-phosphate (tAHMP) into isopentenyl phosphate. Involved in the archaeal mevalonate (MVA) pathway, which provides fundamental precursors for isoprenoid biosynthesis, such as isopentenyl diphosphate (IPP) and dimethylallyl diphosphate (DMAPP). In Methanocaldococcus jannaschii (strain ATCC 43067 / DSM 2661 / JAL-1 / JCM 10045 / NBRC 100440) (Methanococcus jannaschii), this protein is Anhydromevalonate phosphate decarboxylase.